Consider the following 566-residue polypeptide: Myo-inositol transporter 1A (566 aa).

Over 1 to 64 (MSDEKNYGIS…ERTEKLTKFV (64 aa)) the chain is Cytoplasmic. Residues 65 to 85 (VGLALFASVSGFCFGFDTGVI) form a helical membrane-spanning segment. Topologically, residues 86-106 (SAALVSIKDDFGHILDDTEKE) are extracellular. The helical transmembrane segment at 107–127 (WISAATSCGALVGALSSGALA) threads the bilayer. Residues 128–140 (DRVGRKWTLAVGD) are Cytoplasmic-facing. A helical membrane pass occupies residues 141 to 161 (VWFTLGAIIICSSFSVVQMIV). Topologically, residues 162–163 (GR) are extracellular. Residues 164–184 (AVLGLGVGTAAAIAPLYIAEV) form a helical membrane-spanning segment. Residues 185–192 (APTRFRGA) lie on the Cytoplasmic side of the membrane. Residues 193 to 213 (LVTVQSIAITGGQFFSYCIGI) traverse the membrane as a helical segment. Residues 214–222 (PLTGHNGWR) are Extracellular-facing. Residues 223–243 (IQFAIGIVPAVVQAAVVHFLP) traverse the membrane as a helical segment. Over 244-313 (ESPRYDLLRG…VLTEGKYRKP (70 aa)) the chain is Cytoplasmic. Residues 314–334 (AITALGIGIFQQLCGFNSLMY) traverse the membrane as a helical segment. Topologically, residues 335 to 349 (YAATIFSYAGFDNPT) are extracellular. Residues 350–370 (SVGLIVSGTNWFFTFVAMMIL) traverse the membrane as a helical segment. Residues 371-377 (DRVGKRR) are Cytoplasmic-facing. Residues 378–398 (ILLSTYPGMIAGLALASVAFW) form a helical membrane-spanning segment. Over 399–421 (KMTGSTGHRLVEGTEYPQQWSNM) the chain is Extracellular. Residues 422–442 (MLGMMVVFIAFYATGSGNITW) form a helical membrane-spanning segment. Residues 443–458 (TVGEMFPLEMRGIGAS) are Cytoplasmic-facing. Residues 459-479 (ILAGGVWAANIVISATFLTLM) traverse the membrane as a helical segment. At 480 to 485 (NAIGPT) the chain is on the extracellular side. Residues 486 to 506 (PTFALYAGICLAGLIFIYFCY) form a helical membrane-spanning segment. Residues 507-566 (PEPSGLSLEEIQIIYNYGFGVQKSREIRAEHKLKAQEMRDRANSHIGGSATASDDQLNKV) lie on the Cytoplasmic side of the membrane. The interval 546 to 566 (DRANSHIGGSATASDDQLNKV) is disordered. A compositionally biased stretch (polar residues) spans 556–566 (ATASDDQLNKV).

This sequence belongs to the major facilitator superfamily. Sugar transporter (TC 2.A.1.1) family.

The protein localises to the cell membrane. It catalyses the reaction myo-inositol(out) + H(+)(out) = myo-inositol(in) + H(+)(in). Major transporter for myo-inositol. Plays a role in the traversal of the host blood-brain barrier. The protein is Myo-inositol transporter 1A of Cryptococcus neoformans var. grubii serotype A (strain H99 / ATCC 208821 / CBS 10515 / FGSC 9487) (Filobasidiella neoformans var. grubii).